A 674-amino-acid polypeptide reads, in one-letter code: Translation initiation factor IF-2 (674 aa).

The region spanning 174 to 344 is the tr-type G domain; the sequence is IRPPVVTVMG…LLVAELREIK (171 aa). The segment at 183–190 is G1; that stretch reads GHVDHGKT. Residue 183 to 190 participates in GTP binding; that stretch reads GHVDHGKT. The segment at 208 to 212 is G2; sequence GITQS. The G3 stretch occupies residues 229–232; that stretch reads DTPG. GTP is bound by residues 229-233 and 283-286; these read DTPGH and NKID. The segment at 283-286 is G4; it reads NKID. The segment at 320-322 is G5; it reads SAR.

This sequence belongs to the TRAFAC class translation factor GTPase superfamily. Classic translation factor GTPase family. IF-2 subfamily.

It localises to the cytoplasm. Functionally, one of the essential components for the initiation of protein synthesis. Protects formylmethionyl-tRNA from spontaneous hydrolysis and promotes its binding to the 30S ribosomal subunits. Also involved in the hydrolysis of GTP during the formation of the 70S ribosomal complex. In Pseudothermotoga lettingae (strain ATCC BAA-301 / DSM 14385 / NBRC 107922 / TMO) (Thermotoga lettingae), this protein is Translation initiation factor IF-2.